A 173-amino-acid chain; its full sequence is Thiol-disulfide oxidoreductase ResA (173 aa).

A helical; Signal-anchor for type II membrane protein membrane pass occupies residues 10 to 29 (VIILLILSGAVGFTLYQGFF). The 139-residue stretch at 35 to 173 (MQIGKEAPNF…LEGYLKKITP (139 aa)) folds into the Thioredoxin domain. Residues Cys73 and Cys76 are joined by a disulfide bond.

Belongs to the thioredoxin family. ResA subfamily.

It is found in the cell membrane. It functions in the pathway protein modification; cytochrome c assembly. Its function is as follows. Thiol-disulfide oxidoreductase which is required in disulfide reduction during c-type cytochrome synthesis. May accept reducing equivalents from CcdA, leading to breakage of disulfide bonds in apocytochrome c; following this reduction heme can be covalently attached. This is Thiol-disulfide oxidoreductase ResA from Bacillus thuringiensis (strain Al Hakam).